Reading from the N-terminus, the 321-residue chain is Protoheme IX farnesyltransferase (321 aa).

10 helical membrane-spanning segments follow: residues 28 to 48 (VMSL…DPVH), 49 to 69 (PIVG…SGAL), 94 to 114 (VMPN…VFTL), 116 to 136 (IVAN…YVVI), 149 to 169 (IVIG…AATG), 176 to 196 (FILF…LALG), 222 to 242 (ILLY…LGFA), 247 to 267 (GMLS…VYIV), 277 to 297 (AKAL…EIVV), and 300 to 320 (LVPI…PGFF).

This sequence belongs to the UbiA prenyltransferase family. Protoheme IX farnesyltransferase subfamily.

It localises to the cell inner membrane. It catalyses the reaction heme b + (2E,6E)-farnesyl diphosphate + H2O = Fe(II)-heme o + diphosphate. It functions in the pathway porphyrin-containing compound metabolism; heme O biosynthesis; heme O from protoheme: step 1/1. Converts heme B (protoheme IX) to heme O by substitution of the vinyl group on carbon 2 of heme B porphyrin ring with a hydroxyethyl farnesyl side group. The polypeptide is Protoheme IX farnesyltransferase (Beijerinckia indica subsp. indica (strain ATCC 9039 / DSM 1715 / NCIMB 8712)).